Reading from the N-terminus, the 77-residue chain is MEDLNEANFSHLLINLSNNKDIDAQYASTLSVVHELLSAINFKIFNINKKSKKNSKSIEQHPVVHHAASAGREFNRR.

Residues 53 to 77 (KNSKSIEQHPVVHHAASAGREFNRR) form a disordered region.

This sequence belongs to the orthopoxvirus OPG157 family. In terms of assembly, interacts with protein OPG092; the interaction stabilizes both proteins. Interacts with protein OPG062. In terms of processing, phosphorylated by viral OPG054 kinase.

Its function is as follows. Required for the association between the dense viroplasm and the viral membranes to form the mature virion (MV). The protein is Protein OPG157 (OPG157) of Homo sapiens (Human).